The primary structure comprises 179 residues: UPF0302 protein BPUM_1989 (179 aa).

The protein belongs to the UPF0302 family.

The chain is UPF0302 protein BPUM_1989 from Bacillus pumilus (strain SAFR-032).